We begin with the raw amino-acid sequence, 30 residues long: AFNLRNRNFLKLLDFTPREIQYMIDLAIDL.

The protein belongs to the aspartate/ornithine carbamoyltransferase superfamily. OTCase family.

The protein localises to the cytoplasm. The enzyme catalyses carbamoyl phosphate + L-ornithine = L-citrulline + phosphate + H(+). The protein operates within amino-acid degradation; L-arginine degradation via ADI pathway; carbamoyl phosphate from L-arginine: step 2/2. This chain is Ornithine carbamoyltransferase, catabolic (arcB), found in Aeromonas caviae (Aeromonas punctata).